A 144-amino-acid chain; its full sequence is MDKQQGELRQRLTPEQYAVTQEAATERPFSGEYDNFYQEGIYVDVVSGQALFSSRDKYDAGCGWPSFTKPIDQTNLNEHRDESFGMHRTEVTSTQANSHLGHVFPDGPRDRGGLRYCINSAALKFIPVADLEKAGYGQYQSLFK.

The segment covering 1–12 (MDKQQGELRQRL) has biased composition (basic and acidic residues). Positions 1–25 (MDKQQGELRQRLTPEQYAVTQEAAT) are disordered. The MsrB domain occupies 5–128 (QGELRQRLTP…NSAALKFIPV (124 aa)). The Nucleophile role is filled by Cys-117.

Belongs to the MsrB Met sulfoxide reductase family.

The enzyme catalyses L-methionyl-[protein] + [thioredoxin]-disulfide + H2O = L-methionyl-(R)-S-oxide-[protein] + [thioredoxin]-dithiol. This Lactiplantibacillus plantarum (strain ATCC BAA-793 / NCIMB 8826 / WCFS1) (Lactobacillus plantarum) protein is Peptide methionine sulfoxide reductase MsrB.